Here is a 720-residue protein sequence, read N- to C-terminus: Tyrosine-protein kinase wzc (720 aa).

Residues 1–31 (MTEKVKQHAAPVTGSDEIDIGRLVGTVIEAR) are Cytoplasmic-facing. A helical membrane pass occupies residues 32-52 (WWVIGITAVFALCAVVYTFFA). The Periplasmic portion of the chain corresponds to 53 to 424 (TPIYSADALV…TQPGVLKPKK (372 aa)). Residues 425–445 (GLIILGAIILGLMLSIVGVLL) traverse the membrane as a helical segment. Residues 446–720 (RSLFNRGIES…YEYEYKSDAK (275 aa)) lie on the Cytoplasmic side of the membrane. Tyr-569 bears the Phosphotyrosine; by autocatalysis mark. Residues Tyr-708, Tyr-710, Tyr-711, Tyr-713, and Tyr-715 each carry the phosphotyrosine modification.

Belongs to the etk/wzc family. In terms of processing, autophosphorylated. Seems to be phosphorylated through a cooperative two-step mechanism. First, Tyr-569 is phosphorylated in an intramolecular reaction that generates a significant increase of protein kinase activity. Then Tyr-708, Tyr-710, Tyr-711, Tyr-713 and Tyr-715 are phosphorylated in an intermolecular Tyr-569-dependent reaction.

The protein resides in the cell inner membrane. It catalyses the reaction L-tyrosyl-[protein] + ATP = O-phospho-L-tyrosyl-[protein] + ADP + H(+). It participates in glycan metabolism; exopolysaccharide biosynthesis. Its activity is regulated as follows. Dephosphorylated and activated by wzb. In terms of biological role, required for the extracellular polysaccharide colanic acid synthesis. The autophosphorylated form is inactive. Probably involved in the export of colanic acid from the cell to medium. Phosphorylates udg. The chain is Tyrosine-protein kinase wzc (wzc) from Escherichia coli O157:H7.